The following is a 402-amino-acid chain: Tyrosine--tRNA ligase (402 aa).

The 'HIGH' region signature appears at 47–56 (PTAPDLHLGH). The 'KMSKS' region signature appears at 232 to 236 (KMSKS). Lysine 235 contributes to the ATP binding site. The S4 RNA-binding domain occupies 341–401 (VGVLDVLKQI…GKKRFMKLNI (61 aa)).

This sequence belongs to the class-I aminoacyl-tRNA synthetase family. TyrS type 2 subfamily. Homodimer.

It localises to the cytoplasm. The enzyme catalyses tRNA(Tyr) + L-tyrosine + ATP = L-tyrosyl-tRNA(Tyr) + AMP + diphosphate + H(+). In terms of biological role, catalyzes the attachment of tyrosine to tRNA(Tyr) in a two-step reaction: tyrosine is first activated by ATP to form Tyr-AMP and then transferred to the acceptor end of tRNA(Tyr). This Helicobacter pylori (strain J99 / ATCC 700824) (Campylobacter pylori J99) protein is Tyrosine--tRNA ligase.